Here is a 486-residue protein sequence, read N- to C-terminus: Palmitoleoyl-protein carboxylesterase notum2 (486 aa).

The N-terminal stretch at 1 to 18 (MRILEIFAILLILKEVRP) is a signal peptide. N183 is a glycosylation site (N-linked (GlcNAc...) asparagine). Active-site charge relay system residues include S223, D331, and H380.

This sequence belongs to the pectinacetylesterase family. Notum subfamily.

It is found in the secreted. It carries out the reaction [Wnt protein]-O-(9Z)-hexadecenoyl-L-serine + H2O = [Wnt protein]-L-serine + (9Z)-hexadecenoate + H(+). Functionally, carboxylesterase that acts as a key negative regulator of the Wnt signaling pathway by specifically mediating depalmitoleoylation of WNT proteins. Serine palmitoleoylation of WNT proteins is required for efficient binding to frizzled receptors. The sequence is that of Palmitoleoyl-protein carboxylesterase notum2 from Xenopus laevis (African clawed frog).